Reading from the N-terminus, the 282-residue chain is Large ribosomal subunit protein uL2 (282 aa).

2 disordered regions span residues Lys-31–Ile-54 and Leu-223–Arg-282. Composition is skewed to basic residues over residues Thr-34–Ile-54 and Val-270–Arg-282.

Belongs to the universal ribosomal protein uL2 family. In terms of assembly, part of the 50S ribosomal subunit. Forms a bridge to the 30S subunit in the 70S ribosome.

Its function is as follows. One of the primary rRNA binding proteins. Required for association of the 30S and 50S subunits to form the 70S ribosome, for tRNA binding and peptide bond formation. It has been suggested to have peptidyltransferase activity; this is somewhat controversial. Makes several contacts with the 16S rRNA in the 70S ribosome. The polypeptide is Large ribosomal subunit protein uL2 (Anaeromyxobacter dehalogenans (strain 2CP-1 / ATCC BAA-258)).